A 282-amino-acid polypeptide reads, in one-letter code: Snake venom serine protease BmSP (282 aa).

An N-terminal signal peptide occupies residues 1–18; sequence MVLIGVLASLLILQLSYS. A propeptide spanning residues 19–56 is cleaved from the precursor; that stretch reads KSLDDGAKESAYDDEIQQSSWGNSTVNTTLTETVVIQL. Residues Asn41 and Asn45 are each glycosylated (N-linked (GlcNAc...) asparagine). The Peptidase S1 domain maps to 57–280; the sequence is IMGGSECYKS…YIDWIKGIIA (224 aa). 5 disulfides stabilise this stretch: Cys63–Cys195, Cys82–Cys98, Cys174–Cys241, Cys206–Cys220, and Cys231–Cys256. The active-site Charge relay system is His97. The N-linked (GlcNAc...) asparagine glycan is linked to Asn135. The active-site Charge relay system is the Asp142. Residues Asn149 and Asn153 are each glycosylated (N-linked (GlcNAc...) asparagine). Ser235 functions as the Charge relay system in the catalytic mechanism.

The protein belongs to the peptidase S1 family. Snake venom subfamily. As to quaternary structure, monomer. In terms of tissue distribution, expressed by the venom gland.

It localises to the secreted. Snake venom serine protease that may act in the hemostasis system of the prey. The polypeptide is Snake venom serine protease BmSP (Bungarus multicinctus (Many-banded krait)).